We begin with the raw amino-acid sequence, 371 residues long: Cytochrome b (371 aa).

4 helical membrane passes run 25-45 (FGSM…FLAI), 69-90 (WIMQ…YTHI), 105-125 (WLSG…GYVL), and 170-190 (FFAL…IHII). His75 and His89 together coordinate heme b. The heme b site is built by His174 and His188. Residue His193 coordinates a ubiquinone. 4 helical membrane-spanning segments follow: residues 218–238 (YKDT…LSFT), 280–300 (LGGT…PFTH), 312–332 (LAQT…WTAS), and 339–358 (FIII…IMNP).

The protein belongs to the cytochrome b family. The cytochrome bc1 complex contains 3 respiratory subunits (MT-CYB, CYC1 and UQCRFS1), 2 core proteins (UQCRC1 and UQCRC2) and probably 6 low-molecular weight proteins. It depends on heme b as a cofactor.

It localises to the mitochondrion inner membrane. Functionally, component of the ubiquinol-cytochrome c reductase complex (complex III or cytochrome b-c1 complex) that is part of the mitochondrial respiratory chain. The b-c1 complex mediates electron transfer from ubiquinol to cytochrome c. Contributes to the generation of a proton gradient across the mitochondrial membrane that is then used for ATP synthesis. In Sinomicrurus macclellandi (Macclelland's coral snake), this protein is Cytochrome b (MT-CYB).